The following is a 612-amino-acid chain: Zinc metalloproteinase-disintegrin-like 8 (612 aa).

The N-terminal stretch at 1 to 20 is a signal peptide; the sequence is MIQVLLVTICLAVFPYQGSS. A propeptide spanning residues 21 to 189 is cleaved from the precursor; sequence IILGSGNVND…KKASQLNLTP (169 aa). The 197-residue stretch at 199–395 folds into the Peptidase M12B domain; the sequence is KYIELVIVAD…NRPPCILNKP (197 aa). Glu202 contacts Ca(2+). Asn218 is a glycosylation site (N-linked (GlcNAc...) asparagine). Asp286 lines the Ca(2+) pocket. 3 disulfides stabilise this stretch: Cys310/Cys390, Cys350/Cys374, and Cys352/Cys357. A Zn(2+)-binding site is contributed by His335. The active site involves Glu336. Residues His339 and His345 each contribute to the Zn(2+) site. Ca(2+) contacts are provided by Cys390, Asn393, Val405, Asn408, Phe410, Glu412, Glu415, and Asp418. The 87-residue stretch at 403–489 folds into the Disintegrin domain; it reads PPVCGNYFVE…DCPTDDFQRN (87 aa). Cystine bridges form between Cys406–Cys435, Cys417–Cys430, Cys419–Cys425, Cys429–Cys452, Cys443–Cys449, Cys448–Cys474, Cys461–Cys481, Cys468–Cys500, Cys493–Cys505, Cys512–Cys562, Cys527–Cys573, Cys540–Cys550, Cys557–Cys599, and Cys593–Cys605. The D/ECD-tripeptide signature appears at 467–469; the sequence is ECD. Asn502 is a glycosylation site (N-linked (GlcNAc...) asparagine).

This sequence belongs to the venom metalloproteinase (M12B) family. P-III subfamily. Zn(2+) is required as a cofactor. As to expression, expressed by the venom gland.

The protein resides in the secreted. Snake venom metalloproteinase that impairs hemostasis in the envenomed animal. The protein is Zinc metalloproteinase-disintegrin-like 8 of Crotalus adamanteus (Eastern diamondback rattlesnake).